Reading from the N-terminus, the 207-residue chain is Small ribosomal subunit protein uS4c (207 aa).

The region spanning 92–155 is the S4 RNA-binding domain; sequence MRLDNILFRL…TYQSILSKRI (64 aa).

It belongs to the universal ribosomal protein uS4 family. As to quaternary structure, part of the 30S ribosomal subunit. Contacts protein S5. The interaction surface between S4 and S5 is involved in control of translational fidelity.

It is found in the plastid. It localises to the chloroplast. Functionally, one of the primary rRNA binding proteins, it binds directly to 16S rRNA where it nucleates assembly of the body of the 30S subunit. With S5 and S12 plays an important role in translational accuracy. The chain is Small ribosomal subunit protein uS4c (rps4) from Equisetum scirpoides (Dwarf-scouring rush).